A 421-amino-acid chain; its full sequence is Serine hydroxymethyltransferase (421 aa).

(6S)-5,6,7,8-tetrahydrofolate-binding positions include Leu120 and 124 to 126 (GHL). Position 229 is an N6-(pyridoxal phosphate)lysine (Lys229). Residue 354–356 (SPF) coordinates (6S)-5,6,7,8-tetrahydrofolate.

This sequence belongs to the SHMT family. In terms of assembly, homodimer. Pyridoxal 5'-phosphate is required as a cofactor.

Its subcellular location is the cytoplasm. The enzyme catalyses (6R)-5,10-methylene-5,6,7,8-tetrahydrofolate + glycine + H2O = (6S)-5,6,7,8-tetrahydrofolate + L-serine. Its pathway is one-carbon metabolism; tetrahydrofolate interconversion. The protein operates within amino-acid biosynthesis; glycine biosynthesis; glycine from L-serine: step 1/1. In terms of biological role, catalyzes the reversible interconversion of serine and glycine with tetrahydrofolate (THF) serving as the one-carbon carrier. This reaction serves as the major source of one-carbon groups required for the biosynthesis of purines, thymidylate, methionine, and other important biomolecules. Also exhibits THF-independent aldolase activity toward beta-hydroxyamino acids, producing glycine and aldehydes, via a retro-aldol mechanism. This chain is Serine hydroxymethyltransferase, found in Opitutus terrae (strain DSM 11246 / JCM 15787 / PB90-1).